A 674-amino-acid polypeptide reads, in one-letter code: Carbon monoxide dehydrogenase/acetyl-CoA synthase subunit beta (674 aa).

The segment at 1-25 (MPRFRDLSHNCRPSEAPRVMEPKNR) is disordered. Positions 59, 67, 68, 71, 76, and 90 each coordinate [4Fe-4S] cluster. [Ni-4Fe-4S] cluster is bound by residues His-283, Cys-317, Cys-355, Cys-470, Cys-500, and Cys-550.

In terms of assembly, tetramer of two alpha and two beta chains. It depends on [Ni-Fe-S] cluster as a cofactor. [4Fe-4S] cluster is required as a cofactor.

It catalyses the reaction CO + 2 oxidized [2Fe-2S]-[ferredoxin] + H2O = 2 reduced [2Fe-2S]-[ferredoxin] + CO2 + 2 H(+). The beta subunit (this protein) generates CO from CO(2), while the alpha subunit combines the CO with CoA and a methyl group to form acetyl-CoA. The methyl group, which is incorporated into acetyl-CoA, is transferred to the alpha subunit by a corrinoid iron-sulfur protein. The protein is Carbon monoxide dehydrogenase/acetyl-CoA synthase subunit beta of Moorella thermoacetica (Clostridium thermoaceticum).